Reading from the N-terminus, the 738-residue chain is Eukaryotic translation initiation factor 3 subunit B (738 aa).

A sufficient for interaction with HCR1 and TIF32 region spans residues 1 to 120; the sequence is MCGCVGVISN…LFIQFKTAQM (120 aa). Positions 1–245 are sufficient for interaction with PIC8; it reads MCGCVGVISN…GIQSWGGAQF (245 aa). The region spanning 59 to 146 is the RRM domain; it reads NFVVVDGAPI…HRLLVNKLSD (88 aa). WD repeat units lie at residues 211-250, 322-360, 363-406, and 537-579; these read PRKGFTSKYAKFSPKGTYLFSIHPQGIQSWGGAQFESISK, QKEMPWPLVKWSHDDKYCARQGPGALAIYETPSFQLLDK, VKID…QTAR, and VVDK…ENVR.

The protein belongs to the eIF-3 subunit B family. In terms of assembly, component of the eukaryotic translation initiation factor 3 (eIF-3) complex.

Its subcellular location is the cytoplasm. Functionally, RNA-binding component of the eukaryotic translation initiation factor 3 (eIF-3) complex, which is involved in protein synthesis of a specialized repertoire of mRNAs and, together with other initiation factors, stimulates binding of mRNA and methionyl-tRNAi to the 40S ribosome. The eIF-3 complex specifically targets and initiates translation of a subset of mRNAs involved in cell proliferation. In Meyerozyma guilliermondii (strain ATCC 6260 / CBS 566 / DSM 6381 / JCM 1539 / NBRC 10279 / NRRL Y-324) (Yeast), this protein is Eukaryotic translation initiation factor 3 subunit B.